Reading from the N-terminus, the 63-residue chain is Large ribosomal subunit protein bL32 (63 aa).

Positions 1–18 are enriched in basic residues; that stretch reads MPVPKRKTSPSRRGKRRS. The interval 1-26 is disordered; that stretch reads MPVPKRKTSPSRRGKRRSHDGLRPEN.

Belongs to the bacterial ribosomal protein bL32 family.

This Neorickettsia sennetsu (strain ATCC VR-367 / Miyayama) (Ehrlichia sennetsu) protein is Large ribosomal subunit protein bL32.